The following is an 80-amino-acid chain: DNA-binding protein S1FA2 (80 aa).

Residues 54 to 59 carry the Nuclear localization signal motif; sequence PPRKKK. The span at 55–70 shows a compositional bias: basic residues; that stretch reads PRKKKPVSKKKMKREK. A disordered region spans residues 55 to 80; it reads PRKKKPVSKKKMKREKLKQGVSAPGE.

This sequence belongs to the S1FA transcription factor family.

It localises to the nucleus. Its function is as follows. DNA-binding protein that specifically recognizes a negative element (S1F) within the RPS1 promoter. This is DNA-binding protein S1FA2 (S1FA2) from Oryza sativa subsp. japonica (Rice).